Consider the following 254-residue polypeptide: Tabinhibitin 6 (254 aa).

The N-terminal stretch at 1-22 (MLPYWCPLLLAALVLQYATIDA) is a signal peptide. The Cell attachment site motif lies at 31–33 (RGD). The SCP domain occupies 66–210 (LSKINDVRDH…KARALLTCNF (145 aa)).

It belongs to the CRISP family. In terms of tissue distribution, expressed in salivary glands.

The protein resides in the secreted. Functionally, inhibits platelet aggregation induced by all agonists tested (ADP, arachidonic acid, the thromboxane A2 analog U46619, thrombin, and snake venom snaclecs (TMVA that activates platelet through GPIB, and stejnulxin that specifically acts through GPVI (GP6))). May act by competing with fibrinogen for binding to glycoprotein IIb/IIIa (ITGA2B/ITGB3). This is Tabinhibitin 6 from Tabanus yao (Horsefly).